The sequence spans 274 residues: tRNA-cytidine(32) 2-sulfurtransferase (274 aa).

A PP-loop motif motif is present at residues 40–45; the sequence is SGGKDS. Cysteine 115, cysteine 118, and cysteine 206 together coordinate [4Fe-4S] cluster.

Belongs to the TtcA family. Homodimer. It depends on Mg(2+) as a cofactor. [4Fe-4S] cluster serves as cofactor.

The protein localises to the cytoplasm. The enzyme catalyses cytidine(32) in tRNA + S-sulfanyl-L-cysteinyl-[cysteine desulfurase] + AH2 + ATP = 2-thiocytidine(32) in tRNA + L-cysteinyl-[cysteine desulfurase] + A + AMP + diphosphate + H(+). Its pathway is tRNA modification. In terms of biological role, catalyzes the ATP-dependent 2-thiolation of cytidine in position 32 of tRNA, to form 2-thiocytidine (s(2)C32). The sulfur atoms are provided by the cysteine/cysteine desulfurase (IscS) system. The sequence is that of tRNA-cytidine(32) 2-sulfurtransferase from Pseudomonas syringae pv. tomato (strain ATCC BAA-871 / DC3000).